The following is a 1133-amino-acid chain: DNA-directed RNA polymerase subunit beta (1133 aa).

A disordered region spans residues 1085 to 1133 (ADVSSRHTPSRPTYESVTSEDLSPAAGGTFTLARRSREEDEDREEEDDF). Polar residues predominate over residues 1090–1105 (RHTPSRPTYESVTSED). Residues 1123 to 1133 (EDEDREEEDDF) are compositionally biased toward acidic residues.

This sequence belongs to the RNA polymerase beta chain family. In terms of assembly, in cyanobacteria the RNAP catalytic core is composed of 2 alpha, 1 beta, 1 beta', 1 gamma and 1 omega subunit. When a sigma factor is associated with the core the holoenzyme is formed, which can initiate transcription.

It catalyses the reaction RNA(n) + a ribonucleoside 5'-triphosphate = RNA(n+1) + diphosphate. Functionally, DNA-dependent RNA polymerase catalyzes the transcription of DNA into RNA using the four ribonucleoside triphosphates as substrates. The polypeptide is DNA-directed RNA polymerase subunit beta (Synechococcus sp. (strain JA-3-3Ab) (Cyanobacteria bacterium Yellowstone A-Prime)).